A 269-amino-acid polypeptide reads, in one-letter code: Eukaryotic translation initiation factor 3 subunit G-1 (269 aa).

The 79-residue stretch at Ala188–Pro266 folds into the RRM domain. A Phosphoserine modification is found at Ser198.

The protein belongs to the eIF-3 subunit G family. Component of the eukaryotic translation initiation factor 3 (eIF-3) complex. The eIF-3 complex interacts with pix.

The protein resides in the cytoplasm. RNA-binding component of the eukaryotic translation initiation factor 3 (eIF-3) complex, which is involved in protein synthesis of a specialized repertoire of mRNAs and, together with other initiation factors, stimulates binding of mRNA and methionyl-tRNAi to the 40S ribosome. The eIF-3 complex specifically targets and initiates translation of a subset of mRNAs involved in cell proliferation. This subunit can bind 18S rRNA. The sequence is that of Eukaryotic translation initiation factor 3 subunit G-1 from Drosophila melanogaster (Fruit fly).